The following is a 421-amino-acid chain: MDSEPSWTATPSPGGTLFVPNTTTPWLGRDEELAKVEIGILATVLVLATGGNLAVLLILGLQGHKRSRMHLFVLHLALTDLGVALFQVLPQLLWDITYRFQGSDLLCRAVKYLQVLSMFASTYMLLAMTLDRYLAVCHPLRSLQQPSQSTYPLIAAPWLLAAILSLPQVFIFSLREVIQGSGVLDCWADFYFSWGPRAYITWTTMAIFVLPVVVLTACYGLICHEIYKNLKVKTQAGREERRGWPKSSSSAAAAATRGLPSRVSSISTISRAKIRTVKMTFVIVLAYIACWAPFFSVQMWSVWDENAPNEDSTNVAFTISMLLGNLSSCCNPWIYMGFNSHLLPRSLSHRACCRGSKPRVHRQLSNSSLASRRTTLLTHTCGPSTLRLSLNLSLHAKPKPAGSLKDLEQVDGEATMETSIS.

Residues 1–35 (MDSEPSWTATPSPGGTLFVPNTTTPWLGRDEELAK) lie on the Extracellular side of the membrane. Asparagine 21 is a glycosylation site (N-linked (GlcNAc...) asparagine). Residues 36-59 (VEIGILATVLVLATGGNLAVLLIL) form a helical membrane-spanning segment. At 60-71 (GLQGHKRSRMHL) the chain is on the cytoplasmic side. The helical transmembrane segment at 72–93 (FVLHLALTDLGVALFQVLPQLL) threads the bilayer. The Extracellular segment spans residues 94–108 (WDITYRFQGSDLLCR). Cysteine 107 and cysteine 186 are disulfide-bonded. Residues 109 to 130 (AVKYLQVLSMFASTYMLLAMTL) form a helical membrane-spanning segment. The Cytoplasmic segment spans residues 131 to 151 (DRYLAVCHPLRSLQQPSQSTY). A helical transmembrane segment spans residues 152–173 (PLIAAPWLLAAILSLPQVFIFS). Topologically, residues 174–202 (LREVIQGSGVLDCWADFYFSWGPRAYITW) are extracellular. Residues 203-223 (TTMAIFVLPVVVLTACYGLIC) form a helical membrane-spanning segment. Over 224–280 (HEIYKNLKVKTQAGREERRGWPKSSSSAAAAATRGLPSRVSSISTISRAKIRTVKMT) the chain is Cytoplasmic. A helical transmembrane segment spans residues 281–300 (FVIVLAYIACWAPFFSVQMW). Topologically, residues 301–318 (SVWDENAPNEDSTNVAFT) are extracellular. Residues 319-338 (ISMLLGNLSSCCNPWIYMGF) traverse the membrane as a helical segment. Over 339–421 (NSHLLPRSLS…GEATMETSIS (83 aa)) the chain is Cytoplasmic. Residues 399-421 (KPAGSLKDLEQVDGEATMETSIS) are disordered.

The protein belongs to the G-protein coupled receptor 1 family. Vasopressin/oxytocin receptor subfamily.

The protein localises to the cell membrane. In terms of biological role, receptor for arginine vasopressin. The activity of this receptor is mediated by G proteins which activate a phosphatidyl-inositol-calcium second messenger system. The polypeptide is Vasopressin V1b receptor (Avpr1b) (Mus musculus (Mouse)).